The primary structure comprises 483 residues: Regulatory protein ViaA (483 aa).

It belongs to the ViaA family. In terms of assembly, homodimer. Interacts with RavA.

The protein localises to the cytoplasm. Component of the RavA-ViaA chaperone complex, which may act on the membrane to optimize the function of some of the respiratory chains. ViaA stimulates the ATPase activity of RavA. This chain is Regulatory protein ViaA, found in Escherichia coli (strain SMS-3-5 / SECEC).